The sequence spans 120 residues: Small ribosomal subunit protein bS6 (120 aa).

Belongs to the bacterial ribosomal protein bS6 family.

Binds together with bS18 to 16S ribosomal RNA. The polypeptide is Small ribosomal subunit protein bS6 (Blochmanniella floridana).